The following is a 201-amino-acid chain: 3-isopropylmalate dehydratase small subunit (201 aa).

Belongs to the LeuD family. LeuD type 1 subfamily. As to quaternary structure, heterodimer of LeuC and LeuD.

The catalysed reaction is (2R,3S)-3-isopropylmalate = (2S)-2-isopropylmalate. Its pathway is amino-acid biosynthesis; L-leucine biosynthesis; L-leucine from 3-methyl-2-oxobutanoate: step 2/4. Functionally, catalyzes the isomerization between 2-isopropylmalate and 3-isopropylmalate, via the formation of 2-isopropylmaleate. This chain is 3-isopropylmalate dehydratase small subunit, found in Erwinia tasmaniensis (strain DSM 17950 / CFBP 7177 / CIP 109463 / NCPPB 4357 / Et1/99).